Reading from the N-terminus, the 573-residue chain is Probable cytochrome c oxidase subunit 1 (573 aa).

The chain crosses the membrane as a helical span at residues 40 to 60 (IGIMYCVACISFFFIGGLLAL). A Fe(II)-heme a-binding site is contributed by histidine 86. 6 consecutive transmembrane segments (helical) span residues 89–109 (IMLL…VLPL), 121–141 (LNAF…AGFI), 170–190 (LWIM…VNMI), 213–233 (IMVT…ALFG), 258–278 (LFWF…FGIV), and 290–310 (IFGY…SVAV). Cu cation is bound by residues histidine 264 and tyrosine 268. The segment at residues 264 to 268 (HPEVY) is a cross-link (1'-histidyl-3'-tyrosine (His-Tyr)). Residues histidine 313 and histidine 314 each contribute to the Cu cation site. Helical transmembrane passes span 315 to 335 (MFAT…LIAV) and 359 to 379 (MLFS…GVLL). Histidine 397 contributes to the heme a3 binding site. 3 helical membrane passes run 398-418 (FHYV…YFWF), 433-453 (LHFW…HWLG), and 476-496 (VSTI…WNVF). Histidine 399 lines the Fe(II)-heme a pocket.

It belongs to the heme-copper respiratory oxidase family.

It localises to the cell membrane. It catalyses the reaction 4 Fe(II)-[cytochrome c] + O2 + 8 H(+)(in) = 4 Fe(III)-[cytochrome c] + 2 H2O + 4 H(+)(out). It functions in the pathway energy metabolism; oxidative phosphorylation. Functionally, cytochrome c oxidase is the component of the respiratory chain that catalyzes the reduction of oxygen to water. Subunits 1-3 form the functional core of the enzyme complex. CO I is the catalytic subunit of the enzyme. Electrons originating in cytochrome c are transferred via the copper A center of subunit 2 and heme A of subunit 1 to the bimetallic center formed by heme A3 and copper B. This is Probable cytochrome c oxidase subunit 1 (ctaD) from Mycobacterium bovis (strain ATCC BAA-935 / AF2122/97).